The chain runs to 439 residues: Adenylosuccinate synthetase (439 aa).

GTP-binding positions include Gly-25–Lys-31, Gly-53–Thr-55, and Lys-62. Asp-26 functions as the Proton acceptor in the catalytic mechanism. Mg(2+) is bound by residues Asp-26 and Gly-53. Residues Asp-26–Lys-29 and Asn-51–His-54 contribute to the IMP site. The active-site Proton donor is the His-54. 4 residues coordinate IMP: Thr-141, Arg-155, Asn-232, and Thr-247. Thr-307 is a binding site for GTP. Thr-307 to Arg-313 is a substrate binding site. Arg-311 is an IMP binding site. GTP contacts are provided by residues Arg-313, Lys-339–Asp-341, and Gly-425–Gly-427.

This sequence belongs to the adenylosuccinate synthetase family. In terms of assembly, homodimer. The cofactor is Mg(2+).

The protein resides in the cytoplasm. It catalyses the reaction IMP + L-aspartate + GTP = N(6)-(1,2-dicarboxyethyl)-AMP + GDP + phosphate + 2 H(+). The protein operates within purine metabolism; AMP biosynthesis via de novo pathway; AMP from IMP: step 1/2. Plays an important role in the salvage pathway for purine nucleotide biosynthesis. Catalyzes the first commited step in the biosynthesis of AMP from IMP. The polypeptide is Adenylosuccinate synthetase (Plasmodium chabaudi chabaudi).